Consider the following 154-residue polypeptide: Probable chemoreceptor glutamine deamidase CheD (154 aa).

It belongs to the CheD family.

The enzyme catalyses L-glutaminyl-[protein] + H2O = L-glutamyl-[protein] + NH4(+). Its function is as follows. Probably deamidates glutamine residues to glutamate on methyl-accepting chemotaxis receptors (MCPs), playing an important role in chemotaxis. In Methanococcus maripaludis (strain C5 / ATCC BAA-1333), this protein is Probable chemoreceptor glutamine deamidase CheD.